Reading from the N-terminus, the 116-residue chain is Large ribosomal subunit protein bL20 (116 aa).

This sequence belongs to the bacterial ribosomal protein bL20 family.

Its function is as follows. Binds directly to 23S ribosomal RNA and is necessary for the in vitro assembly process of the 50S ribosomal subunit. It is not involved in the protein synthesizing functions of that subunit. This Picosynechococcus sp. (strain ATCC 27264 / PCC 7002 / PR-6) (Agmenellum quadruplicatum) protein is Large ribosomal subunit protein bL20.